The sequence spans 156 residues: Transcription elongation factor GreA (156 aa).

Residues 1–84 (MAKYTISKHR…IEDVLRSTDE (84 aa)) are a coiled coil.

The protein belongs to the GreA/GreB family.

Functionally, necessary for efficient RNA polymerase transcription elongation past template-encoded arresting sites. The arresting sites in DNA have the property of trapping a certain fraction of elongating RNA polymerases that pass through, resulting in locked ternary complexes. Cleavage of the nascent transcript by cleavage factors such as GreA or GreB allows the resumption of elongation from the new 3'terminus. GreA releases sequences of 2 to 3 nucleotides. This is Transcription elongation factor GreA from Ureaplasma parvum serovar 3 (strain ATCC 27815 / 27 / NCTC 11736).